A 466-amino-acid chain; its full sequence is Ribosome biogenesis protein YTM1 (466 aa).

Residues 11–99 (IKIKFFTNEE…EAFLTLEYTR (89 aa)) are ubiquitin-like (UBL) domain. Residues 109-466 (SFNNDDWISS…QINKGSDIAK (358 aa)) form a sufficient for interaction with ERB1 and association with 66S pre-ribosomes region. 7 WD repeats span residues 124–163 (PTTK…EKQY), 165–203 (GHSA…IIDE), 219–258 (GHKA…MTSI), 296–336 (GHSE…CVDT), 338–377 (TTGY…TSDQ), 384–424 (GHTN…SLYT), and 431–466 (STNA…DIAK).

Belongs to the WD repeat WDR12/YTM1 family. Component of the NOP7 complex, composed of ERB1, NOP7 and YTM1. The complex is held together by ERB1, which interacts with NOP7 via its N-terminal domain and with YTM1 via a high-affinity interaction between the seven-bladed beta-propeller domains of the 2 proteins. The NOP7 complex associates with the 66S pre-ribosome. Interacts (via UBL domain) with MDN1 (via VWFA/MIDAS domain).

It is found in the nucleus. The protein localises to the nucleolus. It localises to the nucleoplasm. Its function is as follows. Component of the NOP7 complex, which is required for maturation of the 25S and 5.8S ribosomal RNAs and formation of the 60S ribosome. This chain is Ribosome biogenesis protein YTM1, found in Candida albicans (strain SC5314 / ATCC MYA-2876) (Yeast).